The sequence spans 364 residues: tRNA (adenine(58)-N(1))-methyltransferase catalytic subunit trm61 (364 aa).

Residues 114 to 116 (SAS), glutamate 135, arginine 140, 167 to 168 (DV), and aspartate 186 each bind S-adenosyl-L-methionine. The segment at 280–309 (EQNLSSDAKVEDQDNDSMLGENKSSVSTET) is disordered.

It belongs to the class I-like SAM-binding methyltransferase superfamily. TRM61 family. As to quaternary structure, heterotetramer; composed of two copies of TRM6 and two copies of TRM61.

The protein resides in the nucleus. The enzyme catalyses adenosine(58) in tRNA + S-adenosyl-L-methionine = N(1)-methyladenosine(58) in tRNA + S-adenosyl-L-homocysteine + H(+). Catalytic subunit of tRNA (adenine-N(1)-)-methyltransferase, which catalyzes the formation of N(1)-methyladenine at position 58 (m1A58) in initiator methionyl-tRNA. The polypeptide is tRNA (adenine(58)-N(1))-methyltransferase catalytic subunit trm61 (cpd1) (Schizosaccharomyces pombe (strain 972 / ATCC 24843) (Fission yeast)).